The chain runs to 251 residues: NADPH-dependent oxidoreductase (251 aa).

It belongs to the flavin oxidoreductase frp family. FMN serves as cofactor.

Reduces FMN, organic nitro compounds and disulfide DTNB. Involved in maintenance of the cellular redox state and the disulfide stress response. This is NADPH-dependent oxidoreductase (nfrA) from Staphylococcus aureus (strain MRSA252).